The primary structure comprises 147 residues: Hemoglobin subunit beta-2 (147 aa).

Residues 3-147 (EWTDEERTII…VVSALGRQYH (145 aa)) enclose the Globin domain. Positions 64 and 93 each coordinate heme b.

Belongs to the globin family. Hb 2 is a heterotetramer of two alpha-2 and two beta-2 chains. Hb 3 is a heterotetramer of two alpha-1 and two beta-2 chains. Red blood cells.

In terms of biological role, involved in oxygen transport from gills to the various peripheral tissues. In Gadus morhua (Atlantic cod), this protein is Hemoglobin subunit beta-2 (hbb2).